The primary structure comprises 728 residues: FAD-dependent monooxygenase avaB (728 aa).

Residues 17–37 (VIDLLLTFFFYSGLYGLIAAK) traverse the membrane as a helical segment. Residues 50–64 (NQQCENTDDVPQSFQ) show a composition bias toward polar residues. The interval 50–72 (NQQCENTDDVPQSFQRPRDTRST) is disordered. An FAD-binding site is contributed by Val-168. NADP(+) is bound at residue 490–491 (DL).

It belongs to the FAD-binding monooxygenase family. Requires FAD as cofactor.

The protein localises to the membrane. Its pathway is secondary metabolite metabolism. Multifunctional FAD-dependent monooxygenase; part of the cluster that mediates the biosynthesis of a highly modified cyclo-arginine-tryptophan dipeptide (cRW). Within the pathway, avaB uses the avaA cyclo-arginine-tryptophan dipeptide (cRW) as substrate to generate the cyclo-Arg-formylkynurenine diketopiperazine (DKP). AvaB also catalyzes an additional N-oxidation of the avaC product which is followed by cyclization and dehydration. The first step of the pathway is perfornmed by the arginine-containing cyclodipeptide synthase (RCPDS) avaA that acts as the scaffold-generating enzyme and is responsible for formation of the cyclo-Arg-Trp (cRW) diketopiperazine. AvaB then acts as a multifunctional flavoenzyme that is responsible for generating the cyclo-Arg-formylkynurenine DKP, which can be deformylated by avaC. AvaB then further catalyzes an additional N-oxidation followed by cyclization and dehydration. The next step is an N-acetylation of the guanidine group catalyzed by the arginine N-acetyltransferase avaD. The roles of the additional enzymes identified within the ava cluster still have to be determined. The chain is FAD-dependent monooxygenase avaB from Aspergillus versicolor.